Consider the following 280-residue polypeptide: Phosphatidylglycerol--prolipoprotein diacylglyceryl transferase (280 aa).

Transmembrane regions (helical) follow at residues Trp30 to Val50, Phe71 to Tyr91, Ile106 to Ile126, and Ala132 to Phe152. Arg154 is a binding site for a 1,2-diacyl-sn-glycero-3-phospho-(1'-sn-glycerol). 3 helical membrane-spanning segments follow: residues Gln188–Tyr208, Gly217–Phe237, and Trp251–Ala271.

This sequence belongs to the Lgt family.

The protein localises to the cell inner membrane. It catalyses the reaction L-cysteinyl-[prolipoprotein] + a 1,2-diacyl-sn-glycero-3-phospho-(1'-sn-glycerol) = an S-1,2-diacyl-sn-glyceryl-L-cysteinyl-[prolipoprotein] + sn-glycerol 1-phosphate + H(+). It functions in the pathway protein modification; lipoprotein biosynthesis (diacylglyceryl transfer). Its function is as follows. Catalyzes the transfer of the diacylglyceryl group from phosphatidylglycerol to the sulfhydryl group of the N-terminal cysteine of a prolipoprotein, the first step in the formation of mature lipoproteins. The chain is Phosphatidylglycerol--prolipoprotein diacylglyceryl transferase from Sinorhizobium medicae (strain WSM419) (Ensifer medicae).